Reading from the N-terminus, the 118-residue chain is Evasin P546 (118 aa).

A signal peptide spans M1–A21. 4 disulfides stabilise this stretch: C38–C59, C55–C96, C72–C101, and C91–C110. N45 carries N-linked (GlcNAc...) asparagine glycosylation.

It is found in the secreted. In terms of biological role, salivary chemokine-binding protein which binds to host chemokines CCL1, CCL3, CCL5 and CCL22. The chain is Evasin P546 from Amblyomma cajennense (Cayenne tick).